The sequence spans 155 residues: Aspartate carbamoyltransferase regulatory chain (155 aa).

Residues Cys111, Cys116, Cys137, and Cys140 each contribute to the Zn(2+) site.

This sequence belongs to the PyrI family. In terms of assembly, contains catalytic and regulatory chains. Zn(2+) is required as a cofactor.

In terms of biological role, involved in allosteric regulation of aspartate carbamoyltransferase. The sequence is that of Aspartate carbamoyltransferase regulatory chain from Haloarcula marismortui (strain ATCC 43049 / DSM 3752 / JCM 8966 / VKM B-1809) (Halobacterium marismortui).